We begin with the raw amino-acid sequence, 107 residues long: N(4)-acetylcytidine amidohydrolase (107 aa).

One can recognise an ASCH domain in the interval 6-102; it reads TFYRRFQADI…RLYVISFSLV (97 aa). The Proton acceptor role is filled by Lys20. Thr23 acts as the Nucleophile in catalysis. Catalysis depends on Glu73, which acts as the Proton donor.

Belongs to the N(4)-acetylcytidine amidohydrolase family.

It catalyses the reaction N(4)-acetylcytidine + H2O = cytidine + acetate + H(+). It carries out the reaction N(4)-acetyl-2'-deoxycytidine + H2O = 2'-deoxycytidine + acetate + H(+). The enzyme catalyses N(4)-acetylcytosine + H2O = cytosine + acetate + H(+). Catalyzes the hydrolysis of N(4)-acetylcytidine (ac4C). This chain is N(4)-acetylcytidine amidohydrolase, found in Edwardsiella ictaluri (strain 93-146).